The following is a 369-amino-acid chain: S-(hydroxymethyl)glutathione dehydrogenase (369 aa).

Zn(2+) contacts are provided by Cys40, His62, Cys92, Cys95, Cys98, Cys106, and Cys169.

It belongs to the zinc-containing alcohol dehydrogenase family. Class-III subfamily. As to quaternary structure, homodimer. Zn(2+) is required as a cofactor.

Its subcellular location is the cytoplasm. The catalysed reaction is S-(hydroxymethyl)glutathione + NADP(+) = S-formylglutathione + NADPH + H(+). It carries out the reaction S-(hydroxymethyl)glutathione + NAD(+) = S-formylglutathione + NADH + H(+). The enzyme catalyses a primary alcohol + NAD(+) = an aldehyde + NADH + H(+). It catalyses the reaction a secondary alcohol + NAD(+) = a ketone + NADH + H(+). The catalysed reaction is S-nitrosoglutathione + NADH + H(+) = S-(hydroxysulfenamide)glutathione + NAD(+). Has high formaldehyde dehydrogenase activity in the presence of glutathione and catalyzes the oxidation of normal alcohols in a reaction that is not GSH-dependent. In addition, hemithiolacetals other than those formed from GSH, including omega-thiol fatty acids, also are substrates. Also acts as a S-nitroso-glutathione reductase by catalyzing the NADH-dependent reduction of S-nitrosoglutathione. The sequence is that of S-(hydroxymethyl)glutathione dehydrogenase (frmA) from Synechocystis sp. (strain ATCC 27184 / PCC 6803 / Kazusa).